The sequence spans 629 residues: 1-deoxy-D-xylulose-5-phosphate synthase (629 aa).

Residues His72 and 113 to 115 (GHA) contribute to the thiamine diphosphate site. Mg(2+) is bound at residue Asp144. Residues 145–146 (GA), Asn174, Tyr287, and Glu370 each bind thiamine diphosphate. Asn174 serves as a coordination point for Mg(2+).

It belongs to the transketolase family. DXPS subfamily. Homodimer. Requires Mg(2+) as cofactor. The cofactor is thiamine diphosphate.

The catalysed reaction is D-glyceraldehyde 3-phosphate + pyruvate + H(+) = 1-deoxy-D-xylulose 5-phosphate + CO2. It participates in metabolic intermediate biosynthesis; 1-deoxy-D-xylulose 5-phosphate biosynthesis; 1-deoxy-D-xylulose 5-phosphate from D-glyceraldehyde 3-phosphate and pyruvate: step 1/1. Its function is as follows. Catalyzes the acyloin condensation reaction between C atoms 2 and 3 of pyruvate and glyceraldehyde 3-phosphate to yield 1-deoxy-D-xylulose-5-phosphate (DXP). The protein is 1-deoxy-D-xylulose-5-phosphate synthase of Prochlorococcus marinus (strain AS9601).